The chain runs to 314 residues: 4-hydroxy-3-methylbut-2-enyl diphosphate reductase (314 aa).

Cys12 is a binding site for [4Fe-4S] cluster. His41 and His74 together coordinate (2E)-4-hydroxy-3-methylbut-2-enyl diphosphate. Positions 41 and 74 each coordinate dimethylallyl diphosphate. Residues His41 and His74 each contribute to the isopentenyl diphosphate site. Position 96 (Cys96) interacts with [4Fe-4S] cluster. His124 is a (2E)-4-hydroxy-3-methylbut-2-enyl diphosphate binding site. Position 124 (His124) interacts with dimethylallyl diphosphate. His124 is an isopentenyl diphosphate binding site. Glu126 (proton donor) is an active-site residue. Thr167 provides a ligand contact to (2E)-4-hydroxy-3-methylbut-2-enyl diphosphate. Cys197 serves as a coordination point for [4Fe-4S] cluster. (2E)-4-hydroxy-3-methylbut-2-enyl diphosphate-binding residues include Ser225, Ser226, Asn227, and Ser269. Residues Ser225, Ser226, Asn227, and Ser269 each coordinate dimethylallyl diphosphate. Positions 225, 226, 227, and 269 each coordinate isopentenyl diphosphate.

This sequence belongs to the IspH family. It depends on [4Fe-4S] cluster as a cofactor.

The catalysed reaction is isopentenyl diphosphate + 2 oxidized [2Fe-2S]-[ferredoxin] + H2O = (2E)-4-hydroxy-3-methylbut-2-enyl diphosphate + 2 reduced [2Fe-2S]-[ferredoxin] + 2 H(+). The enzyme catalyses dimethylallyl diphosphate + 2 oxidized [2Fe-2S]-[ferredoxin] + H2O = (2E)-4-hydroxy-3-methylbut-2-enyl diphosphate + 2 reduced [2Fe-2S]-[ferredoxin] + 2 H(+). It participates in isoprenoid biosynthesis; dimethylallyl diphosphate biosynthesis; dimethylallyl diphosphate from (2E)-4-hydroxy-3-methylbutenyl diphosphate: step 1/1. It functions in the pathway isoprenoid biosynthesis; isopentenyl diphosphate biosynthesis via DXP pathway; isopentenyl diphosphate from 1-deoxy-D-xylulose 5-phosphate: step 6/6. In terms of biological role, catalyzes the conversion of 1-hydroxy-2-methyl-2-(E)-butenyl 4-diphosphate (HMBPP) into a mixture of isopentenyl diphosphate (IPP) and dimethylallyl diphosphate (DMAPP). Acts in the terminal step of the DOXP/MEP pathway for isoprenoid precursor biosynthesis. The protein is 4-hydroxy-3-methylbut-2-enyl diphosphate reductase of Aliivibrio fischeri (strain ATCC 700601 / ES114) (Vibrio fischeri).